The primary structure comprises 354 residues: Transcriptional regulator URE2 (354 aa).

Met2 bears the N-acetylmethionine mark. The prion domain (PrD) stretch occupies residues 2 to 89 (MNNNGNQVSN…TLEQHRQQQQ (88 aa)). A compositionally biased stretch (polar residues) spans 22–42 (GNRNSNTTTDQSNINFEFSTG). Residues 22 to 76 (GNRNSNTTTDQSNINFEFSTGVNNNNNNNSSSNNNNVQNNNSGRNGSQNNDNENN) are disordered. The span at 43 to 73 (VNNNNNNNSSSNNNNVQNNNSGRNGSQNNDN) shows a compositional bias: low complexity. The 85-residue stretch at 112–196 (EGYTLFSHRS…HLVNKYYKET (85 aa)) folds into the GST N-terminal domain. Glutathione-binding positions include Asn124, His151, 164–165 (RV), and 180–181 (ES). The GST C-terminal domain maps to 205–354 (DLADQSQINA…PAVIKALRGE (150 aa)).

Belongs to the GST superfamily. In terms of assembly, homodimer. Interacts with NNK1.

It localises to the cytoplasm. The enzyme catalyses 2 glutathione + H2O2 = glutathione disulfide + 2 H2O. In terms of biological role, plays an important role in nitrogen catabolite repression. Down-regulates the expression of many genes involved in nitrogen utilization by inhibiting the GATA transcriptional activators GLN3 and GAT1. Under good nitrogen conditions, binds to the phosphorylated forms of GLN3 and GAT1 and sequesters them in the cytoplasm, preventing transcription of genes expressed upon nitrogen limitation. Is also an atypical glutaredoxin without a catalytical cysteine residue. Has glutathione peroxidase and thiol:disulfide oxidoreductase activities in both native and fibrillar form. Also shows insulin disulfide reductase and dehydroascorbic acid reductase (DHAR) activities. This Saccharomyces cerevisiae (strain ATCC 204508 / S288c) (Baker's yeast) protein is Transcriptional regulator URE2 (URE2).